A 926-amino-acid polypeptide reads, in one-letter code: ABC transporter A family member 6 (926 aa).

Transmembrane regions (helical) follow at residues L34–S54, A336–L356, F389–L409, T418–V438, V451–I471, and D525–I545. An ABC transporter domain is found at I610–T847. G648 to T655 lines the ATP pocket.

This sequence belongs to the ABC transporter superfamily. ABCA family. CPR flippase (TC 3.A.1.211) subfamily.

The protein localises to the membrane. The polypeptide is ABC transporter A family member 6 (ABCA6) (Arabidopsis thaliana (Mouse-ear cress)).